A 128-amino-acid polypeptide reads, in one-letter code: Small ribosomal subunit protein uS13 (128 aa).

A disordered region spans residues 85–128; it reads GSYRGLRHRRSLPVRGQRTHTNARTRKGPRRGTVANKKKATGKT. The span at 89–128 shows a compositional bias: basic residues; sequence GLRHRRSLPVRGQRTHTNARTRKGPRRGTVANKKKATGKT.

This sequence belongs to the universal ribosomal protein uS13 family. As to quaternary structure, part of the 30S ribosomal subunit. Forms a loose heterodimer with protein S19. Forms two bridges to the 50S subunit in the 70S ribosome.

Located at the top of the head of the 30S subunit, it contacts several helices of the 16S rRNA. In the 70S ribosome it contacts the 23S rRNA (bridge B1a) and protein L5 of the 50S subunit (bridge B1b), connecting the 2 subunits; these bridges are implicated in subunit movement. Contacts the tRNAs in the A and P-sites. This Solibacter usitatus (strain Ellin6076) protein is Small ribosomal subunit protein uS13.